The sequence spans 323 residues: MGPVELLHMSVFSQSFSPCGRYLAAGNNYGEIAVFSLSAALSPDASERSQKPILNFTAHDGPVFSLLSTESHLLSAGNGEISAWSWAELIKKSTKAAWTRKPNYETSLEIPEINAMIINPKDNNLIVGGGDNNIHIMDMETGTFKSVLKGHTDYIHCLSFKEREGEILSGGEDGAVRIWDSRTNRPVHCIEVFKYEECARPQFGKWISCLATDSDWMLCGGGPSLSLWHLRSMSPTSVFPLSGCQREAVSYQDLIMSVGEGPYVSHCLHGGTVKAQIPCSPSSLNTLALNLKNTEHRVMTVGGSSHQIDVFTNFSYRALSLSF.

6 WD repeats span residues L6–A45, A58–A96, L108–V147, G150–C189, R200–V238, and C279–L321.

Belongs to the WD repeat THOC6 family. In terms of assembly, component of the THO subcomplex, which is composed of thoc1, thoc2, thoc3, thoc5, thoc6 and thoc7. Component of the transcription/export (TREX) complex at least composed of alyref/thoc4, ddx39b, sarnp/cip29, chtop and the THO subcomplex.

It localises to the nucleus. The protein localises to the nucleus speckle. Component of the THO subcomplex of the TREX complex which is thought to couple mRNA transcription, processing and nuclear export, and which specifically associates with spliced mRNA and not with unspliced pre-mRNA. Plays a key structural role in the oligomerization of the THO-DDX39B complex. TREX is recruited to spliced mRNAs by a transcription-independent mechanism, binds to mRNA upstream of the exon-junction complex (EJC) and is recruited in a splicing- and cap-dependent manner to a region near the 5' end of the mRNA where it functions in mRNA export to the cytoplasm via the TAP/NXF1 pathway. Plays a role in apoptosis negative control involved in brain development. The chain is THO complex subunit 6 homolog (thoc6) from Danio rerio (Zebrafish).